A 330-amino-acid chain; its full sequence is GTPase Obg (330 aa).

One can recognise an Obg domain in the interval 1-159; the sequence is MHFIDEVKIY…MWIHLSLKLL (159 aa). Positions 160-327 constitute an OBG-type G domain; that stretch reads SDVGLVGLPN…IVKLALETIK (168 aa). GTP is bound by residues 166 to 173, 191 to 195, 212 to 215, 279 to 282, and 308 to 310; these read GLPNAGKS, FTTLV, DIPG, NKCD, and STC. Mg(2+)-binding residues include Ser173 and Thr193.

This sequence belongs to the TRAFAC class OBG-HflX-like GTPase superfamily. OBG GTPase family. In terms of assembly, monomer. The cofactor is Mg(2+).

Its subcellular location is the cytoplasm. Functionally, an essential GTPase which binds GTP, GDP and possibly (p)ppGpp with moderate affinity, with high nucleotide exchange rates and a fairly low GTP hydrolysis rate. Plays a role in control of the cell cycle, stress response, ribosome biogenesis and in those bacteria that undergo differentiation, in morphogenesis control. The protein is GTPase Obg of Rickettsia rickettsii (strain Iowa).